The following is a 155-amino-acid chain: MADLSSLKDLGTAQEASAPVHVRKVDAQGRAYATGKRKNAIARVWVKPGTGKITVNGRDFPVYFARPVLQMILQQPVVAAARTGQFDVIATVTGGGLSGQAGAVRHGISKALTYFEPGLRSVLKKGGFLTRDSRVVERKKYGKAKARRSFQFSKR.

The protein belongs to the universal ribosomal protein uS9 family.

This is Small ribosomal subunit protein uS9 from Allorhizobium ampelinum (strain ATCC BAA-846 / DSM 112012 / S4) (Agrobacterium vitis (strain S4)).